Here is a 367-residue protein sequence, read N- to C-terminus: Methylthioribose-1-phosphate isomerase (367 aa).

The Proton donor role is filled by Asp250.

It belongs to the eIF-2B alpha/beta/delta subunits family. MtnA subfamily.

The protein resides in the cytoplasm. The protein localises to the nucleus. The enzyme catalyses 5-(methylsulfanyl)-alpha-D-ribose 1-phosphate = 5-(methylsulfanyl)-D-ribulose 1-phosphate. It functions in the pathway amino-acid biosynthesis; L-methionine biosynthesis via salvage pathway; L-methionine from S-methyl-5-thio-alpha-D-ribose 1-phosphate: step 1/6. Catalyzes the interconversion of methylthioribose-1-phosphate (MTR-1-P) into methylthioribulose-1-phosphate (MTRu-1-P). The chain is Methylthioribose-1-phosphate isomerase (IDI2) from Hordeum vulgare (Barley).